Reading from the N-terminus, the 241-residue chain is Small ribosomal subunit protein uS3 (241 aa).

Positions 39–109 (IRQHVEKNLS…QIRINVIEVS (71 aa)) constitute a KH type-2 domain. A disordered region spans residues 215–241 (EQAMAAPAPTPRKKRRPQQFEDRSNEE). Residues 232 to 241 (QQFEDRSNEE) show a composition bias toward basic and acidic residues.

It belongs to the universal ribosomal protein uS3 family. As to quaternary structure, part of the 30S ribosomal subunit. Forms a tight complex with proteins S10 and S14.

Functionally, binds the lower part of the 30S subunit head. Binds mRNA in the 70S ribosome, positioning it for translation. This is Small ribosomal subunit protein uS3 from Crocosphaera subtropica (strain ATCC 51142 / BH68) (Cyanothece sp. (strain ATCC 51142)).